A 239-amino-acid polypeptide reads, in one-letter code: Cytochrome c oxidase subunit 2 (239 aa).

The Mitochondrial intermembrane segment spans residues 1–26 (MATPAQLGLMDAASPVMEEMIYFHDH). A helical membrane pass occupies residues 27–48 (VMLVLILITCLIFYSMLVLISS). At 49–62 (KYIYRFLTDGHVIE) the chain is on the mitochondrial matrix side. Residues 63-82 (TVWTVIPAIILVVVALPSLK) traverse the membrane as a helical segment. Residues 83-239 (LLYLTDELDN…ESLGSLNMKR (157 aa)) lie on the Mitochondrial intermembrane side of the membrane. His-161, Cys-196, Glu-198, Cys-200, His-204, and Met-207 together coordinate Cu cation. Glu-198 is a Mg(2+) binding site.

The protein belongs to the cytochrome c oxidase subunit 2 family. As to quaternary structure, component of the cytochrome c oxidase (complex IV, CIV), a multisubunit enzyme composed of a catalytic core of 3 subunits and several supernumerary subunits. The complex exists as a monomer or a dimer and forms supercomplexes (SCs) in the inner mitochondrial membrane with ubiquinol-cytochrome c oxidoreductase (cytochrome b-c1 complex, complex III, CIII). It depends on Cu cation as a cofactor.

Its subcellular location is the mitochondrion inner membrane. The catalysed reaction is 4 Fe(II)-[cytochrome c] + O2 + 8 H(+)(in) = 4 Fe(III)-[cytochrome c] + 2 H2O + 4 H(+)(out). Component of the cytochrome c oxidase, the last enzyme in the mitochondrial electron transport chain which drives oxidative phosphorylation. The respiratory chain contains 3 multisubunit complexes succinate dehydrogenase (complex II, CII), ubiquinol-cytochrome c oxidoreductase (cytochrome b-c1 complex, complex III, CIII) and cytochrome c oxidase (complex IV, CIV), that cooperate to transfer electrons derived from NADH and succinate to molecular oxygen, creating an electrochemical gradient over the inner membrane that drives transmembrane transport and the ATP synthase. Cytochrome c oxidase is the component of the respiratory chain that catalyzes the reduction of oxygen to water. Electrons originating from reduced cytochrome c in the intermembrane space (IMS) are transferred via the dinuclear copper A center (CU(A)) of subunit 2 and heme A of subunit 1 to the active site in subunit 1, a binuclear center (BNC) formed by heme A3 and copper B (CU(B)). The BNC reduces molecular oxygen to 2 water molecules using 4 electrons from cytochrome c in the IMS and 4 protons from the mitochondrial matrix. The chain is Cytochrome c oxidase subunit 2 (COII) from Branchiostoma lanceolatum (Common lancelet).